A 449-amino-acid chain; its full sequence is Glucose-6-phosphate isomerase (449 aa).

Glutamate 291 (proton donor) is an active-site residue. Residues histidine 312 and lysine 426 contribute to the active site.

The protein belongs to the GPI family.

It localises to the cytoplasm. It catalyses the reaction alpha-D-glucose 6-phosphate = beta-D-fructose 6-phosphate. Its pathway is carbohydrate biosynthesis; gluconeogenesis. It functions in the pathway carbohydrate degradation; glycolysis; D-glyceraldehyde 3-phosphate and glycerone phosphate from D-glucose: step 2/4. Catalyzes the reversible isomerization of glucose-6-phosphate to fructose-6-phosphate. In Pediococcus pentosaceus (strain ATCC 25745 / CCUG 21536 / LMG 10740 / 183-1w), this protein is Glucose-6-phosphate isomerase.